The chain runs to 162 residues: 2-C-methyl-D-erythritol 2,4-cyclodiphosphate synthase (162 aa).

A divalent metal cation-binding residues include Asp-10 and His-12. Residues 10–12 and 36–37 contribute to the 4-CDP-2-C-methyl-D-erythritol 2-phosphate site; these read DVH and HS. His-44 contacts a divalent metal cation. Residues 58 to 60, 63 to 67, and Arg-144 contribute to the 4-CDP-2-C-methyl-D-erythritol 2-phosphate site; these read DIG and FSDTD.

This sequence belongs to the IspF family. In terms of assembly, homotrimer. Requires a divalent metal cation as cofactor.

The catalysed reaction is 4-CDP-2-C-methyl-D-erythritol 2-phosphate = 2-C-methyl-D-erythritol 2,4-cyclic diphosphate + CMP. It participates in isoprenoid biosynthesis; isopentenyl diphosphate biosynthesis via DXP pathway; isopentenyl diphosphate from 1-deoxy-D-xylulose 5-phosphate: step 4/6. Involved in the biosynthesis of isopentenyl diphosphate (IPP) and dimethylallyl diphosphate (DMAPP), two major building blocks of isoprenoid compounds. Catalyzes the conversion of 4-diphosphocytidyl-2-C-methyl-D-erythritol 2-phosphate (CDP-ME2P) to 2-C-methyl-D-erythritol 2,4-cyclodiphosphate (ME-CPP) with a corresponding release of cytidine 5-monophosphate (CMP). The polypeptide is 2-C-methyl-D-erythritol 2,4-cyclodiphosphate synthase (Burkholderia mallei (strain NCTC 10247)).